The chain runs to 418 residues: D-amino acid dehydrogenase (418 aa).

3–17 (VLVLGAGVAGVSSAW) is an FAD binding site.

It belongs to the DadA oxidoreductase family. It depends on FAD as a cofactor.

It catalyses the reaction a D-alpha-amino acid + A + H2O = a 2-oxocarboxylate + AH2 + NH4(+). Its pathway is amino-acid degradation; D-alanine degradation; NH(3) and pyruvate from D-alanine: step 1/1. Oxidative deamination of D-amino acids. In Neisseria meningitidis serogroup C / serotype 2a (strain ATCC 700532 / DSM 15464 / FAM18), this protein is D-amino acid dehydrogenase.